Reading from the N-terminus, the 455-residue chain is MGWGGGGGCTPRPPIHQQPPERRVVTVVFLGLLLDLLAFTLLLPLLPGLLESHGRAHDPLYGSWQGGVDWFATAIGMPVEKRYNSVLFGGLIGSAFSVLQFLCAPLTGATSDCLGRRPVMLLCLMGVATSYAVWATSRSFAAFLASRLIGGISKGNVSLSTAIVADLGSPLARSQGMAVIGVAFSLGFTLGPMLGASLPLEMAPWFALLFAASDLLFIFCFLPETLPLEKRAPSIALGFRDAADLLSPLALLRFSAVARGQDPPSGDRLSSLRRLGLVYFLYLFLFSGLEYTLSFLTHQRFQFSSLQQGKMFFLIGLTMATIQGAYARRIHPGGEVAAVKRALLLLVPAFLLIGWGRSLPVLGLGLLLYSFAAAVVVPCLSSVVAGYGSPGQKGTVMGTLRSLGALARAAGPLVAASVYWLAGAQACFTTWSGLFLLPFFLLQKLSYPAQTLKAE.

Transmembrane regions (helical) follow at residues 27–47 (VVFL…PLLP), 86–106 (VLFG…CAPL), 113–135 (CLGR…AVWA), 148–168 (LIGG…ADLG), 176–196 (GMAV…MLGA), 202–222 (MAPW…FCFL), 275–295 (LGLV…TLSF), 310–327 (KMFF…GAYA), 336–356 (VAAV…IGWG), 359–379 (LPVL…VVPC), and 421–441 (LAGA…PFFL).

It belongs to the major facilitator superfamily. In terms of tissue distribution, expressed in luminal membrane of renal tubules (at protein level). Detected in all tissues tested with higher expression in heart, splee, kidney, leukocytes and prostate.

Its subcellular location is the nucleus inner membrane. It is found in the cell membrane. Functionally, probable organic anion transporter which may serve as a transporter for some non-steroidal anti-inflammatory drugs (NSAIDs) as well as other organic anions across the luminal membranes of renal proximal tubules at the final excretion step into the urine. This chain is Major facilitator superfamily domain-containing protein 10 (MFSD10), found in Homo sapiens (Human).